The chain runs to 613 residues: GPI mannosyltransferase 3 (613 aa).

Residue N19 is glycosylated (N-linked (GlcNAc...) asparagine). A run of 12 helical transmembrane segments spans residues 22-42 (FFLRDIIVIRLINAWWIATFF), 83-103 (LFAGVYLVADFISSHILPVGI), 106-126 (ATILVAVPQALQAVIAGLGDW), 132-152 (AVSIYGANSNVSFFALFLQIF), 168-188 (LEMTLTVMAMYYWPWELLGVA), 216-236 (LAVVLRPTNILIWATIVLFTI), 252-272 (VVTLIREAIWCGSLILAISAA), 280-300 (FWTFPAYNFLYFNLSKSLAVF), 309-329 (YFLQGLPLICTTSLPFAVASL), 342-362 (FNVLKTLAYTVFTTVGALSLI), 369-389 (FIYPLLPALSILAAPYTASFF), and 411-431 (YLFVALGVNMFLAGYLSFFHQ).

Belongs to the glycosyltransferase 22 family. PIGB subfamily.

The protein localises to the endoplasmic reticulum membrane. It functions in the pathway glycolipid biosynthesis; glycosylphosphatidylinositol-anchor biosynthesis. Functionally, mannosyltransferase involved in glycosylphosphatidylinositol-anchor biosynthesis. Transfers the third mannose to Man2-GlcN-acyl-PI during GPI precursor assembly. This is GPI mannosyltransferase 3 (GPI10) from Gibberella zeae (strain ATCC MYA-4620 / CBS 123657 / FGSC 9075 / NRRL 31084 / PH-1) (Wheat head blight fungus).